Here is a 168-residue protein sequence, read N- to C-terminus: Ribosome maturation factor RimM (168 aa).

Positions 96–168 constitute a PRC barrel domain; the sequence is EGDYYWTDLI…IIVVEWDADF (73 aa).

Belongs to the RimM family. As to quaternary structure, binds ribosomal protein uS19.

The protein localises to the cytoplasm. Functionally, an accessory protein needed during the final step in the assembly of 30S ribosomal subunit, possibly for assembly of the head region. Essential for efficient processing of 16S rRNA. May be needed both before and after RbfA during the maturation of 16S rRNA. It has affinity for free ribosomal 30S subunits but not for 70S ribosomes. This Coxiella burnetii (strain RSA 331 / Henzerling II) protein is Ribosome maturation factor RimM.